We begin with the raw amino-acid sequence, 304 residues long: GS homeobox 2 (304 aa).

The segment at 116–151 (AQFCPRVNHAHHHHHPPQHHHHHHQPQQPGSAAAAA) is disordered. Positions 123–140 (NHAHHHHHPPQHHHHHHQ) are enriched in basic residues. Low complexity predominate over residues 141-151 (PQQPGSAAAAA). A DNA-binding region (homeobox) is located at residues 202 to 261 (GKRMRTAFTSTQLLELEREFSSNMYLSRLRRIEIATYLNLSEKQVKIWFQNRRVKHKKEG). Residues 283–304 (RSEDEDSLSPASANDDKEISPL) form a disordered region.

It belongs to the Antp homeobox family.

The protein localises to the nucleus. The protein resides in the cytoplasm. Its function is as follows. Transcription factor that binds 5'-CNAATTAG-3' DNA sequence and regulates the expression of numerous genes including genes important for brain development. During telencephalic development, causes ventralization of pallial progenitors and, depending on the developmental stage, specifies different neuronal fates. At early stages, necessary and sufficient to correctly specify the ventral lateral ganglionic eminence (LGE) and its major derivatives, the striatal projection neurons. At later stages, may specify LGE progenitors toward dorsal LGE fates, including olfactory bulb interneurons. In Homo sapiens (Human), this protein is GS homeobox 2 (GSX2).